Consider the following 1050-residue polypeptide: Toll-like receptor 7 (1050 aa).

The N-terminal stretch at M1 to G26 is a signal peptide. At F27–D837 the chain is on the extracellular side. 20 LRR repeats span residues I42–P64, T65–R87, N89–V111, L126–S149, H151–E170, L171–I195, M203–N226, L228–N247, L248–C273, N275–L289, T290–N312, R314–H337, L339–H364, L369–V392, L396–H419, E421–G443, H493–H516, L517–L542, R543–E565, and Q567–M589. 2 N-linked (GlcNAc...) asparagine glycosylation sites follow: N66 and N69. N167, N190, and N215 each carry an N-linked (GlcNAc...) asparagine glycan. A glycan (N-linked (GlcNAc...) asparagine) is linked at N387. Residues N524 and N535 are each glycosylated (N-linked (GlcNAc...) asparagine). N591 carries an N-linked (GlcNAc...) asparagine glycan. 8 LRR repeats span residues L596–S619, D620–D645, L650–G673, P675–L698, L699–C722, K724–D746, A747–E770, and L773–V796. 2 N-linked (GlcNAc...) asparagine glycosylation sites follow: N680 and N721. N800 carries N-linked (GlcNAc...) asparagine glycosylation. Residues L838–M858 traverse the membrane as a helical segment. Over T859–V1050 the chain is Cytoplasmic. The TIR domain occupies S890–L1034.

The protein belongs to the Toll-like receptor family. Homodimer. Interacts with MYD88 via their respective TIR domains. Interacts with UNC93B1. Interacts with SMPDL3B. The first cleavage is performed by asparagine endopeptidase or cathepsin family members. This initial cleavage event is followed by a trimming event that is solely cathepsin mediated and required for optimal receptor signaling.

The protein resides in the endosome membrane. It is found in the endoplasmic reticulum membrane. The protein localises to the lysosome. It localises to the cytoplasmic vesicle. Its subcellular location is the phagosome. Activated by guanosine analogs including deoxyguanosine, 7-thia-8-oxoguanosine or 7-deazaguanosine in a RNA-independent manner. Endosomal receptor that plays a key role in innate and adaptive immunity. Controls host immune response against pathogens through recognition of uridine-containing single strand RNAs (ssRNAs) of viral origin or guanosine analogs. Upon binding to agonists, undergoes dimerization that brings TIR domains from the two molecules into direct contact, leading to the recruitment of TIR-containing downstream adapter MYD88 through homotypic interaction. In turn, the Myddosome signaling complex is formed involving IRAK4, IRAK1, TRAF6, TRAF3 leading to activation of downstream transcription factors NF-kappa-B and IRF7 to induce pro-inflammatory cytokines and interferons, respectively. In plasmacytoid dendritic cells, RNASET2 endonuclease cooperates with PLD3 or PLD4 5'-&gt;3' exonucleases to process RNA and release 2',3'-cyclic guanosine monophosphate (2',3'-cGMP) and cytidine-rich RNA fragments that occupy TLR7 ligand-binding pockets and trigger a signaling-competent state. The chain is Toll-like receptor 7 (Tlr7) from Mus musculus (Mouse).